The chain runs to 203 residues: VPS4-associated protein 1 (203 aa).

Residues 99–109 (EKETNNSKDPD) are compositionally biased toward basic and acidic residues. Disordered stretches follow at residues 99–125 (EKETNNSKDPDPTTTDSTDTSPQAKND) and 171–193 (QVNRERYLKEQENYSNTDPEELL). Residues 110–120 (PTTTDSTDTSP) show a composition bias toward low complexity. A coiled-coil region spans residues 121-157 (QAKNDAEILSETKKQYSKILDKVTELQRKNRKYELAK). Residues 171 to 182 (QVNRERYLKEQE) are compositionally biased toward basic and acidic residues.

As to quaternary structure, interacts with VPS4.

It is found in the cytoplasm. Its subcellular location is the endosome. In terms of biological role, VPS4-associated protein involved in trafficking to the vacuole. The chain is VPS4-associated protein 1 (VFA1) from Saccharomyces cerevisiae (strain ATCC 204508 / S288c) (Baker's yeast).